Here is a 313-residue protein sequence, read N- to C-terminus: tRNA dimethylallyltransferase (313 aa).

17-24 (GPTASGKT) is an ATP binding site. 19 to 24 (TASGKT) contributes to the substrate binding site. Interaction with substrate tRNA stretches follow at residues 42-45 (DSAL), 166-170 (QRLSR), 247-252 (RCVGYR), and 280-287 (KRQITWLR).

It belongs to the IPP transferase family. Monomer. The cofactor is Mg(2+).

The catalysed reaction is adenosine(37) in tRNA + dimethylallyl diphosphate = N(6)-dimethylallyladenosine(37) in tRNA + diphosphate. Catalyzes the transfer of a dimethylallyl group onto the adenine at position 37 in tRNAs that read codons beginning with uridine, leading to the formation of N6-(dimethylallyl)adenosine (i(6)A). The chain is tRNA dimethylallyltransferase from Proteus mirabilis (strain HI4320).